The primary structure comprises 152 residues: 6,7-dimethyl-8-ribityllumazine synthase (152 aa).

5-amino-6-(D-ribitylamino)uracil is bound by residues Phe-21, 55–57, and 79–81; these read AFE and CVI. 84–85 provides a ligand contact to (2S)-2-hydroxy-3-oxobutyl phosphate; that stretch reads AT. Residue His-87 is the Proton donor of the active site. Position 112 (Phe-112) interacts with 5-amino-6-(D-ribitylamino)uracil. Position 126 (Arg-126) interacts with (2S)-2-hydroxy-3-oxobutyl phosphate.

It belongs to the DMRL synthase family. In terms of assembly, forms an icosahedral capsid composed of 60 subunits, arranged as a dodecamer of pentamers.

It catalyses the reaction (2S)-2-hydroxy-3-oxobutyl phosphate + 5-amino-6-(D-ribitylamino)uracil = 6,7-dimethyl-8-(1-D-ribityl)lumazine + phosphate + 2 H2O + H(+). Its pathway is cofactor biosynthesis; riboflavin biosynthesis; riboflavin from 2-hydroxy-3-oxobutyl phosphate and 5-amino-6-(D-ribitylamino)uracil: step 1/2. Its function is as follows. Catalyzes the formation of 6,7-dimethyl-8-ribityllumazine by condensation of 5-amino-6-(D-ribitylamino)uracil with 3,4-dihydroxy-2-butanone 4-phosphate. This is the penultimate step in the biosynthesis of riboflavin. The polypeptide is 6,7-dimethyl-8-ribityllumazine synthase (Staphylococcus haemolyticus (strain JCSC1435)).